We begin with the raw amino-acid sequence, 117 residues long: MSEKKNCKNSSTNNNQTQDPSRNELQVPRSFVDRVVQDERDVQSQSSSTINTLLTLLDCLADYIMERVGLEASNNGSMRNTSQDREREVDNNREPHSAESDVTRFLFDEMPKSRKND.

2 disordered regions span residues 1–30 (MSEK…VPRS) and 71–117 (EASN…RKND). Residues 72-81 (ASNNGSMRNT) are compositionally biased toward polar residues. The span at 82–117 (SQDREREVDNNREPHSAESDVTRFLFDEMPKSRKND) shows a compositional bias: basic and acidic residues.

As to quaternary structure, may interact with the N-terminus of HD.

This Homo sapiens (Human) protein is Huntingtin-interacting protein M.